The sequence spans 197 residues: Holliday junction branch migration complex subunit RuvA (197 aa).

Residues Met1–Leu64 are domain I. The tract at residues Thr65–Ile144 is domain II. A flexible linker region spans residues Ile145–Ala149. The segment at Ala149–Lys197 is domain III.

It belongs to the RuvA family. As to quaternary structure, homotetramer. Forms an RuvA(8)-RuvB(12)-Holliday junction (HJ) complex. HJ DNA is sandwiched between 2 RuvA tetramers; dsDNA enters through RuvA and exits via RuvB. An RuvB hexamer assembles on each DNA strand where it exits the tetramer. Each RuvB hexamer is contacted by two RuvA subunits (via domain III) on 2 adjacent RuvB subunits; this complex drives branch migration. In the full resolvosome a probable DNA-RuvA(4)-RuvB(12)-RuvC(2) complex forms which resolves the HJ.

The protein localises to the cytoplasm. In terms of biological role, the RuvA-RuvB-RuvC complex processes Holliday junction (HJ) DNA during genetic recombination and DNA repair, while the RuvA-RuvB complex plays an important role in the rescue of blocked DNA replication forks via replication fork reversal (RFR). RuvA specifically binds to HJ cruciform DNA, conferring on it an open structure. The RuvB hexamer acts as an ATP-dependent pump, pulling dsDNA into and through the RuvAB complex. HJ branch migration allows RuvC to scan DNA until it finds its consensus sequence, where it cleaves and resolves the cruciform DNA. This Clostridium botulinum (strain ATCC 19397 / Type A) protein is Holliday junction branch migration complex subunit RuvA.